Reading from the N-terminus, the 131-residue chain is MKKTLLLNSVLSELIASLGHGDMVVIGDAGLPIPPETRRIDLALCRGIPPLLETVRVIASEMQVEKALIATETGQRSPHIRDGLGQLLPNTPFEEVSHEQLKALCRQARAVVRTGEYTPYANVILVAGVVF.

The Proton donor role is filled by histidine 20. Substrate-binding positions include aspartate 28, histidine 98, and 120 to 122; that span reads YAN.

The protein belongs to the RbsD / FucU family. RbsD subfamily. Homodecamer.

It is found in the cytoplasm. It catalyses the reaction beta-D-ribopyranose = beta-D-ribofuranose. Its pathway is carbohydrate metabolism; D-ribose degradation; D-ribose 5-phosphate from beta-D-ribopyranose: step 1/2. Functionally, catalyzes the interconversion of beta-pyran and beta-furan forms of D-ribose. This Chloroflexus aggregans (strain MD-66 / DSM 9485) protein is D-ribose pyranase.